The chain runs to 533 residues: Ribonuclease III domain-containing protein RNC1, chloroplastic (533 aa).

The transit peptide at 1–30 directs the protein to the chloroplast; sequence MAPPAMAFQALALGPLPLPLPAARRRRRVR. Disordered regions lie at residues 31–57 and 66–85; these read VLAV…NSPS and RKKA…ILKP. Residues 39–53 are compositionally biased toward pro residues; the sequence is TPPPPPSPSSPPEPA. The segment covering 69-82 has biased composition (basic residues); the sequence is AVSPKKKHPPRRFI. RNase III domains are found at residues 164–279 and 411–511; these read LLYL…LCFG and EHPR…CVYG.

As to quaternary structure, interacts with RNA. Part of large ribonucleo-protein particles that contain CAF1 and/or CAF2.

The protein resides in the plastid. It localises to the chloroplast. In terms of biological role, binds specific group II introns in chloroplasts and facilitates their splicing. Acts on both subgroup IIA and subgroup IIB introns. The substrates of the subgroup II also require the CRM domain proteins CAF1 or CAF2. Binds both single-stranded and double-stranded RNA non-specifically, but lacks endonuclease activity. Required for plastid ribosome biogenesis. The sequence is that of Ribonuclease III domain-containing protein RNC1, chloroplastic from Oryza sativa subsp. japonica (Rice).